A 540-amino-acid polypeptide reads, in one-letter code: Zinc metalloproteinase nas-10 (540 aa).

The Peptidase M12A domain occupies 293–500; that stretch reads ASIFFEQNLI…VEILNKMYCK (208 aa). 5 disulfides stabilise this stretch: C339-C499, C365-C385, C504-C540, C511-C533, and C520-C537. H394 provides a ligand contact to Zn(2+). E395 is an active-site residue. Residues H398 and H404 each coordinate Zn(2+). A ShKT domain is found at 504-540; it reads CDDKNVYCGAWALQDLCNNPNHNVWMRSNCRKSCNFC.

Requires Zn(2+) as cofactor.

Functionally, metalloprotease. This Caenorhabditis elegans protein is Zinc metalloproteinase nas-10.